The following is a 114-amino-acid chain: Large ribosomal subunit protein uL24 (114 aa).

This sequence belongs to the universal ribosomal protein uL24 family. As to quaternary structure, part of the 50S ribosomal subunit.

Functionally, one of two assembly initiator proteins, it binds directly to the 5'-end of the 23S rRNA, where it nucleates assembly of the 50S subunit. Its function is as follows. One of the proteins that surrounds the polypeptide exit tunnel on the outside of the subunit. The protein is Large ribosomal subunit protein uL24 of Acidothermus cellulolyticus (strain ATCC 43068 / DSM 8971 / 11B).